Here is a 449-residue protein sequence, read N- to C-terminus: Methionine aminopeptidase 2-2 (449 aa).

A disordered region spans residues 1 to 91 (MAAQAAPELA…PRIPLTTLFP (91 aa)). Residues 15 to 28 (NKNTGSAEASTVPA) show a composition bias toward polar residues. Residues 34 to 50 (DDAENEGDSDDDRDDEQ) show a composition bias toward acidic residues. The span at 61–75 (KKKKKKRPKKKKKTA) shows a compositional bias: basic residues. Position 199 (His199) interacts with substrate. Asp219, Asp230, and His299 together coordinate a divalent metal cation. Residue His307 coordinates substrate. 2 residues coordinate a divalent metal cation: Glu335 and Glu430.

It belongs to the peptidase M24A family. Methionine aminopeptidase eukaryotic type 2 subfamily. Requires Co(2+) as cofactor. Zn(2+) is required as a cofactor. The cofactor is Mn(2+). Fe(2+) serves as cofactor.

The protein localises to the cytoplasm. It carries out the reaction Release of N-terminal amino acids, preferentially methionine, from peptides and arylamides.. Functionally, cotranslationally removes the N-terminal methionine from nascent proteins. The N-terminal methionine is often cleaved when the second residue in the primary sequence is small and uncharged (Met-Ala-, Cys, Gly, Pro, Ser, Thr, or Val). This is Methionine aminopeptidase 2-2 from Arthroderma gypseum (strain ATCC MYA-4604 / CBS 118893) (Microsporum gypseum).